The sequence spans 267 residues: Cerberus (267 aa).

The N-terminal stretch at 1–17 (MHLLLFQLLVLLPLGKT) is a signal peptide. 2 disordered regions span residues 19-52 (RHQD…EAEE) and 87-113 (WKKP…QSLI). Asparagine 26 carries N-linked (GlcNAc...) asparagine glycosylation. The span at 88 to 101 (KKPEREMHPSRDSD) shows a compositional bias: basic and acidic residues. 4 cysteine pairs are disulfide-bonded: cysteine 162–cysteine 209, cysteine 176–cysteine 223, cysteine 186–cysteine 239, and cysteine 190–cysteine 241. The 85-residue stretch at 162-246 (CRTVPFSQTI…EECQCKVKTE (85 aa)) folds into the CTCK domain. Asparagine 222 is a glycosylation site (N-linked (GlcNAc...) asparagine).

Belongs to the DAN family. In terms of assembly, forms monomers and predominantly dimers. Post-translationally, N-glycosylated.

It is found in the secreted. Cytokine that may play a role in anterior neural induction and somite formation during embryogenesis in part through a BMP-inhibitory mechanism. Can regulate Nodal signaling during gastrulation as well as the formation and patterning of the primitive streak. This is Cerberus (CER1) from Homo sapiens (Human).